Consider the following 323-residue polypeptide: ADP-ribose glycohydrolase MACROD1 (323 aa).

3 positions are modified to N6-succinyllysine: Lys94, Lys101, and Lys127. Residue Lys136 forms a Glycyl lysine isopeptide (Lys-Gly) (interchain with G-Cter in SUMO2) linkage. Positions 139-320 constitute a Macro domain; sequence DPKYKKDKQL…IYRERLPHYF (182 aa). 157-159 contacts substrate; the sequence is GDI. Residue Lys161 is modified to N6-acetyllysine. Substrate contacts are provided by residues 170 to 172, 177 to 182, 265 to 271, and Phe304; these read AAN, GGGGVD, and ISTGVFG.

The protein belongs to the MacroD-type family. MacroD1/2-like subfamily. As to quaternary structure, interacts with ESR1; Interacts in a manner that is estrogen independent but is enhanced by estrogen. Interacts (via macro domain) with AR.

It localises to the nucleus. It carries out the reaction 3''-O-acetyl-ADP-D-ribose + H2O = ADP-D-ribose + acetate + H(+). The catalysed reaction is 2''-O-acetyl-ADP-D-ribose + H2O = ADP-D-ribose + acetate + H(+). It catalyses the reaction 4-O-(ADP-D-ribosyl)-L-aspartyl-[protein] + H2O = L-aspartyl-[protein] + ADP-D-ribose + H(+). The enzyme catalyses 5-O-(ADP-D-ribosyl)-L-glutamyl-[protein] + H2O = L-glutamyl-[protein] + ADP-D-ribose + H(+). It carries out the reaction alpha-NAD(+) + H2O = ADP-D-ribose + nicotinamide + H(+). With respect to regulation, subject to competitive inhibition by the product ADP-ribose. In terms of biological role, removes ADP-ribose from aspartate and glutamate residues in proteins bearing a single ADP-ribose moiety. Inactive towards proteins bearing poly-ADP-ribose. Deacetylates O-acetyl-ADP ribose, a signaling molecule generated by the deacetylation of acetylated lysine residues in histones and other proteins. Plays a role in estrogen signaling. Binds to androgen receptor (AR) and amplifies the transactivation function of AR in response to androgen. May play an important role in carcinogenesis and/or progression of hormone-dependent cancers by feed-forward mechanism that activates ESR1 transactivation. Could be an ESR1 coactivator, providing a positive feedback regulatory loop for ESR1 signal transduction. Could be involved in invasive growth by down-regulating CDH1 in endometrial cancer cells. Enhances ESR1-mediated transcription activity. In Mus musculus (Mouse), this protein is ADP-ribose glycohydrolase MACROD1.